An 882-amino-acid polypeptide reads, in one-letter code: Alanine--tRNA ligase (882 aa).

The Zn(2+) site is built by histidine 567, histidine 571, cysteine 669, and histidine 673.

The protein belongs to the class-II aminoacyl-tRNA synthetase family. Zn(2+) is required as a cofactor.

The protein localises to the cytoplasm. It catalyses the reaction tRNA(Ala) + L-alanine + ATP = L-alanyl-tRNA(Ala) + AMP + diphosphate. Its function is as follows. Catalyzes the attachment of alanine to tRNA(Ala) in a two-step reaction: alanine is first activated by ATP to form Ala-AMP and then transferred to the acceptor end of tRNA(Ala). Also edits incorrectly charged Ser-tRNA(Ala) and Gly-tRNA(Ala) via its editing domain. The sequence is that of Alanine--tRNA ligase from Thermosynechococcus vestitus (strain NIES-2133 / IAM M-273 / BP-1).